A 503-amino-acid polypeptide reads, in one-letter code: Aminoaldehyde dehydrogenase 2, peroxisomal (503 aa).

Na(+) contacts are provided by Ile28, Asp99, and Leu189. 238–245 (GSTMTGSK) contacts NAD(+). Glu260 functions as the Proton acceptor in the catalytic mechanism. Residues Cys294 and Glu393 each contribute to the NAD(+) site. Residue Cys294 is the Nucleophile of the active site. A Microbody targeting signal motif is present at residues 501-503 (SKL).

The protein belongs to the aldehyde dehydrogenase family. Expressed in leaves, flowers and fruits.

It localises to the peroxisome. The enzyme catalyses 4-aminobutanal + NAD(+) + H2O = 4-aminobutanoate + NADH + 2 H(+). The catalysed reaction is 3-aminopropanal + NAD(+) + H2O = beta-alanine + NADH + 2 H(+). Its pathway is amine and polyamine biosynthesis; betaine biosynthesis via choline pathway; betaine from betaine aldehyde: step 1/1. In terms of biological role, dehydrogenase that catalyzes the oxidation of several aminoaldehydes. Metabolizes and detoxifies aldehyde products of polyamine degradation to non-toxic amino acids. Catalyzes the oxidation of 4-aminobutanal and 3-aminopropanal to 4-aminobutanoate and beta-alanine, respectively. This Malus domestica (Apple) protein is Aminoaldehyde dehydrogenase 2, peroxisomal.